The following is a 456-amino-acid chain: F-box/FBD/LRR-repeat protein At3g52680 (456 aa).

One can recognise an F-box domain in the interval 20-73; the sequence is KDRISELPDGLLLKILSSLPTNIVVATSVLSKQWRSLWKLVPNLEFDSDDYESE. LRR repeat units follow at residues 74–100, 102–127, 152–179, 180–205, 225–252, 270–295, and 318–344; these read HYTF…RLKF, NFNP…VLDF, TLKL…HLEF, VRYK…RLYR, TIHD…LIEE, IAEV…LLNL, and TREA…KLTD. Positions 358 to 409 constitute an FBD domain; sequence KWNEPKDVPECLLSQLETFVWRRFDWGREEEKEIATYILKNGRRLKKATFST.

This is F-box/FBD/LRR-repeat protein At3g52680 from Arabidopsis thaliana (Mouse-ear cress).